The chain runs to 241 residues: Venom nerve growth factor 2 (241 aa).

Residues 1 to 18 form the signal peptide; the sequence is MSMLCYTLITAFLIGIWA. Positions 19-125 are excised as a propeptide; that stretch reads APKSEDNVPL…SLNRNIRAKR (107 aa). The interval 47-67 is disordered; it reads GLKTSRNTDQRHPAPQKAEDQ. 3 disulfide bridges follow: C139–C203, C181–C231, and C191–C233.

The protein belongs to the NGF-beta family. Homodimer; non-covalently linked. In terms of tissue distribution, expressed by the venom gland.

It is found in the secreted. Functionally, nerve growth factor is important for the development and maintenance of the sympathetic and sensory nervous systems. It stimulates division and differentiation of sympathetic and embryonic sensory neurons as well as basal forebrain cholinergic neurons in the brain. Its relevance in the snake venom is not clear. However, it has been shown to inhibit metalloproteinase-dependent proteolysis of platelet glycoprotein Ib alpha, suggesting a metalloproteinase inhibition to prevent metalloprotease autodigestion and/or protection against prey proteases. Binds a lipid between the two protein chains in the homodimer. The lipid-bound form promotes histamine relase from mouse mast cells, contrary to the lipid-free form. The protein is Venom nerve growth factor 2 of Naja sputatrix (Malayan spitting cobra).